The chain runs to 118 residues: Co-chaperonin GroES (118 aa).

Belongs to the GroES chaperonin family. As to quaternary structure, heptamer of 7 subunits arranged in a ring. Interacts with the chaperonin GroEL.

Its subcellular location is the cytoplasm. Its function is as follows. Together with the chaperonin GroEL, plays an essential role in assisting protein folding. The GroEL-GroES system forms a nano-cage that allows encapsulation of the non-native substrate proteins and provides a physical environment optimized to promote and accelerate protein folding. GroES binds to the apical surface of the GroEL ring, thereby capping the opening of the GroEL channel. This chain is Co-chaperonin GroES, found in Helicobacter pylori (strain Shi470).